We begin with the raw amino-acid sequence, 322 residues long: uncharacterized protein (322 aa).

Residues 1–27 (MKRLFWNLKHKKAWLVLLLGTGMILSS) form the signal peptide. C28 carries N-palmitoyl cysteine lipidation. The S-diacylglycerol cysteine moiety is linked to residue C28. A compositionally biased stretch (polar residues) spans 235–254 (DNSTNPNAPGSGQGDSTPPA). Residues 235–298 (DNSTNPNAPG…AVQRSQKSYG (64 aa)) form a disordered region. The segment covering 257–267 (GEGGGSDGSSG) has biased composition (gly residues). A compositionally biased stretch (polar residues) spans 274 to 296 (NGQNTTPTSPQSSQPAVQRSQKS).

The protein localises to the cell membrane. This is an uncharacterized protein from Mycoplasma genitalium (strain ATCC 33530 / DSM 19775 / NCTC 10195 / G37) (Mycoplasmoides genitalium).